The following is a 633-amino-acid chain: Endosomal/prevacuolar sodium/hydrogen exchanger (633 aa).

The signal sequence occupies residues 1 to 21 (MLSKVLLNIAFKVLLTTAKRA). Over 22–61 (VDPDDDDELLPSPDLPGSDDPIAGDPDVDLNPVTEEMFSS) the chain is Lumenal. The tract at residues 25-44 (DDDDELLPSPDLPGSDDPIA) is disordered. A compositionally biased stretch (low complexity) spans 31-42 (LPSPDLPGSDDP). The helical transmembrane segment at 62-82 (WALFIMLLLLISALWSSYYLT) threads the bilayer. The Cytoplasmic portion of the chain corresponds to 83 to 85 (QKR). Residues 86-106 (IRAVHETVLSIFYGMVIGLII) form a helical membrane-spanning segment. Topologically, residues 107–117 (RMSPGHYIQDT) are lumenal. The helical transmembrane segment at 118 to 138 (VTFNSSYFFNVLLPPIILNSG) threads the bilayer. An Amiloride-binding motif is present at residues 124 to 133 (YFFNVLLPPI). Over 139–152 (YELNQVNFFNNMLS) the chain is Cytoplasmic. Residues 153 to 173 (ILIFAIPGTFISAVVIGIILY) traverse the membrane as a helical segment. Residues 174-189 (IWTFLGLESIDISFAD) are Lumenal-facing. Residues 190–211 (AMSVGATLSATDPVTILSIFNA) form a helical membrane-spanning segment. At 212–217 (YKVDPK) the chain is on the cytoplasmic side. A helical membrane pass occupies residues 218-238 (LYTIIFGESLLNDAISIVMFE). The Lumenal portion of the chain corresponds to 239–258 (TCQKFHGQPATFSSVFEGAG). Residues 259–279 (LFLMTFSVSLLIGVLIGILVA) traverse the membrane as a helical segment. Residues 280 to 288 (LLLKHTHIR) lie on the Cytoplasmic side of the membrane. A helical transmembrane segment spans residues 289 to 308 (RYPQIESCLILLIAYESYFF). Topologically, residues 309-313 (SNGCH) are lumenal. A helical transmembrane segment spans residues 314 to 333 (MSGIVSLLFCGITLKHYAYY). Topologically, residues 334 to 344 (NMSRRSQITIK) are cytoplasmic. A helical transmembrane segment spans residues 345–364 (YIFQLLARLSENFIFIYLGL). Residues 365-376 (ELFTEVELVYKP) lie on the Cytoplasmic side of the membrane. A helical membrane pass occupies residues 377–397 (LLIIVAAISICVARWCAVFPL). Over 398–431 (SQFVNWIYRVKTIRSMSGITGENISVPDEIPYNY) the chain is Lumenal. Asparagine 420 carries N-linked (GlcNAc...) asparagine glycosylation. A helical transmembrane segment spans residues 432 to 452 (QMMTFWAGLRGAVGVALALGI). The Cytoplasmic segment spans residues 453-457 (QGEYK). A helical membrane pass occupies residues 458-478 (FTLLATVLVVVVLTVIIFGGT). The residue at position 490 (threonine 490) is a Phosphothreonine. Serine 494 is subject to Phosphoserine. Position 498 is a phosphothreonine (threonine 498). The residue at position 499 (serine 499) is a Phosphoserine. 3 N-linked (GlcNAc...) asparagine glycosylation sites follow: asparagine 515, asparagine 550, and asparagine 563. Residues 553–578 (TTGGNTFGGLNETENTSPNPARSSMD) are disordered. Polar residues predominate over residues 564 to 574 (ETENTSPNPAR). Serine 569 bears the Phosphoserine mark.

It belongs to the monovalent cation:proton antiporter 1 (CPA1) transporter (TC 2.A.36) family. As to quaternary structure, interacts with CYP6.

Its subcellular location is the endosome membrane. It localises to the prevacuolar compartment membrane. Endosomal/prevacuolar electroneutral Na(+)/H(+) exchanger which mediates intracellular sequestration of Na(+) cations, regulates vacuolar pH and contributes to osmotolerance following sudden exposure to hyperosmotic media. Also contributes to the postdiauxic/stationary phase resistance to osmotic stress and allows for the continued growth of cells until the acquired osmotolerance response can occur. Involved in hygromycin resistance probably through its influence on the electrochemical proton gradient affecting secondarily the entrance of hygromycin. Mediates pH-dependent vesicle trafficking out of the endosome. Contributes to K(+) sequestration and homeostasis. This Saccharomyces cerevisiae (strain ATCC 204508 / S288c) (Baker's yeast) protein is Endosomal/prevacuolar sodium/hydrogen exchanger (NHX1).